Here is a 216-residue protein sequence, read N- to C-terminus: Holliday junction branch migration complex subunit RuvA (216 aa).

Residues 1–64 form a domain I region; sequence MISFIKGVLI…EDAQQLYGFK (64 aa). Residues 65–143 form a domain II region; sequence SKVDKKVFQE…KMANEIYAQT (79 aa). Positions 144–163 are flexible linker; the sequence is SGTTTTSQDSQAQQAPTSAV. The domain III stretch occupies residues 164–216; sequence LANSIFNESVDALLALGYKQKDAEKMSRSAMGDATTAAEVIRKALQGSIRSKR.

It belongs to the RuvA family. In terms of assembly, homotetramer. Forms an RuvA(8)-RuvB(12)-Holliday junction (HJ) complex. HJ DNA is sandwiched between 2 RuvA tetramers; dsDNA enters through RuvA and exits via RuvB. An RuvB hexamer assembles on each DNA strand where it exits the tetramer. Each RuvB hexamer is contacted by two RuvA subunits (via domain III) on 2 adjacent RuvB subunits; this complex drives branch migration. In the full resolvosome a probable DNA-RuvA(4)-RuvB(12)-RuvC(2) complex forms which resolves the HJ.

It is found in the cytoplasm. Its function is as follows. The RuvA-RuvB-RuvC complex processes Holliday junction (HJ) DNA during genetic recombination and DNA repair, while the RuvA-RuvB complex plays an important role in the rescue of blocked DNA replication forks via replication fork reversal (RFR). RuvA specifically binds to HJ cruciform DNA, conferring on it an open structure. The RuvB hexamer acts as an ATP-dependent pump, pulling dsDNA into and through the RuvAB complex. HJ branch migration allows RuvC to scan DNA until it finds its consensus sequence, where it cleaves and resolves the cruciform DNA. The chain is Holliday junction branch migration complex subunit RuvA from Francisella tularensis subsp. novicida (strain U112).